The following is a 298-amino-acid chain: 4-diphosphocytidyl-2-C-methyl-D-erythritol kinase (298 aa).

Lys15 is a catalytic residue. 100–110 is an ATP binding site; the sequence is PIAAGIGGGSA. The active site involves Asp142.

This sequence belongs to the GHMP kinase family. IspE subfamily.

It catalyses the reaction 4-CDP-2-C-methyl-D-erythritol + ATP = 4-CDP-2-C-methyl-D-erythritol 2-phosphate + ADP + H(+). It participates in isoprenoid biosynthesis; isopentenyl diphosphate biosynthesis via DXP pathway; isopentenyl diphosphate from 1-deoxy-D-xylulose 5-phosphate: step 3/6. Its function is as follows. Catalyzes the phosphorylation of the position 2 hydroxy group of 4-diphosphocytidyl-2C-methyl-D-erythritol. In Rhodopseudomonas palustris (strain BisA53), this protein is 4-diphosphocytidyl-2-C-methyl-D-erythritol kinase.